Reading from the N-terminus, the 239-residue chain is Ribonuclease PH (239 aa).

Phosphate contacts are provided by residues R87 and 125 to 127 (GTR).

This sequence belongs to the RNase PH family. In terms of assembly, homohexameric ring arranged as a trimer of dimers.

It carries out the reaction tRNA(n+1) + phosphate = tRNA(n) + a ribonucleoside 5'-diphosphate. In terms of biological role, phosphorolytic 3'-5' exoribonuclease that plays an important role in tRNA 3'-end maturation. Removes nucleotide residues following the 3'-CCA terminus of tRNAs; can also add nucleotides to the ends of RNA molecules by using nucleoside diphosphates as substrates, but this may not be physiologically important. Probably plays a role in initiation of 16S rRNA degradation (leading to ribosome degradation) during starvation. The protein is Ribonuclease PH of Cyanothece sp. (strain PCC 7425 / ATCC 29141).